A 292-amino-acid polypeptide reads, in one-letter code: MAAITASMVAELRAKTDAPMMECKKALTEADGDLNKAEELLRVKLGNKASKAASRVTAEGVVAAFIDGTTGALVELNCETDFVSKNDDFLAFSAKVAELVAKQNPADVAALSALEIDGVSVEATRTALIGKIGENMTIRRFARYANGGKLVSYLHGTRIGVMVEFDGDEAAAKDVAMHVAAMKPVSLSAEQVPADLIAKERSIAEQKAAESGKPAEIAAKMVEGSVQKYLKEVSLFNQPFVKNDKQTVEQMLKAANTTVKSFTLYVVGEGIEKKQDDFAAEVAAQVAAAQKG.

The involved in Mg(2+) ion dislocation from EF-Tu stretch occupies residues 80 to 83; that stretch reads TDFV.

The protein belongs to the EF-Ts family.

The protein resides in the cytoplasm. Its function is as follows. Associates with the EF-Tu.GDP complex and induces the exchange of GDP to GTP. It remains bound to the aminoacyl-tRNA.EF-Tu.GTP complex up to the GTP hydrolysis stage on the ribosome. The sequence is that of Elongation factor Ts from Cupriavidus taiwanensis (strain DSM 17343 / BCRC 17206 / CCUG 44338 / CIP 107171 / LMG 19424 / R1) (Ralstonia taiwanensis (strain LMG 19424)).